Consider the following 715-residue polypeptide: Fatty acid oxidation complex subunit alpha (715 aa).

Positions 1-190 (MIYEGKAITV…KVGAVDAVVA (190 aa)) are enoyl-CoA hydratase/isomerase. Residue Asp297 participates in substrate binding. A 3-hydroxyacyl-CoA dehydrogenase region spans residues 312–715 (HDVKQAAVLG…MAKNGQRFFN (404 aa)). NAD(+) contacts are provided by residues Met325, Asp344, 401-403 (VVE), Lys408, and Ser430. The active-site For 3-hydroxyacyl-CoA dehydrogenase activity is His451. NAD(+) is bound at residue Asn454. Residues Asn501 and Tyr660 each contribute to the substrate site.

It in the N-terminal section; belongs to the enoyl-CoA hydratase/isomerase family. In the C-terminal section; belongs to the 3-hydroxyacyl-CoA dehydrogenase family. As to quaternary structure, heterotetramer of two alpha chains (FadB) and two beta chains (FadA).

It carries out the reaction a (3S)-3-hydroxyacyl-CoA + NAD(+) = a 3-oxoacyl-CoA + NADH + H(+). The enzyme catalyses a (3S)-3-hydroxyacyl-CoA = a (2E)-enoyl-CoA + H2O. The catalysed reaction is a 4-saturated-(3S)-3-hydroxyacyl-CoA = a (3E)-enoyl-CoA + H2O. It catalyses the reaction (3S)-3-hydroxybutanoyl-CoA = (3R)-3-hydroxybutanoyl-CoA. It carries out the reaction a (3Z)-enoyl-CoA = a 4-saturated (2E)-enoyl-CoA. The enzyme catalyses a (3E)-enoyl-CoA = a 4-saturated (2E)-enoyl-CoA. It participates in lipid metabolism; fatty acid beta-oxidation. Functionally, involved in the aerobic and anaerobic degradation of long-chain fatty acids via beta-oxidation cycle. Catalyzes the formation of 3-oxoacyl-CoA from enoyl-CoA via L-3-hydroxyacyl-CoA. It can also use D-3-hydroxyacyl-CoA and cis-3-enoyl-CoA as substrate. This chain is Fatty acid oxidation complex subunit alpha, found in Pseudomonas putida (Arthrobacter siderocapsulatus).